The chain runs to 122 residues: Fluoride-specific ion channel FluC (122 aa).

4 consecutive transmembrane segments (helical) span residues 6 to 26 (LVVGFGGFIGAILRMLSINLV), 33 to 53 (SISFGTLFVNVLGSFIIGLLF), 60 to 80 (GLSPLLKSFISTGFLGAFTTF), and 101 to 121 (LNIILNVFLCLFAAWLGFLIF). Positions 75 and 78 each coordinate Na(+).

It belongs to the fluoride channel Fluc/FEX (TC 1.A.43) family.

The protein resides in the cell inner membrane. It carries out the reaction fluoride(in) = fluoride(out). Its activity is regulated as follows. Na(+) is not transported, but it plays an essential structural role and its presence is essential for fluoride channel function. Its function is as follows. Fluoride-specific ion channel. Important for reducing fluoride concentration in the cell, thus reducing its toxicity. This chain is Fluoride-specific ion channel FluC, found in Campylobacter jejuni subsp. jejuni serotype O:2 (strain ATCC 700819 / NCTC 11168).